An 81-amino-acid chain; its full sequence is Photosystem I iron-sulfur center (81 aa).

2 4Fe-4S ferredoxin-type domains span residues 2-31 (SHSVKIYDTCIGCTQCVRACPTDVLEMIPW) and 39-68 (IASAPRTEDCVGCKRCESACPTDFLSVRVY). The [4Fe-4S] cluster site is built by cysteine 11, cysteine 14, cysteine 17, cysteine 21, cysteine 48, cysteine 51, cysteine 54, and cysteine 58.

As to quaternary structure, the eukaryotic PSI reaction center is composed of at least 11 subunits. It depends on [4Fe-4S] cluster as a cofactor.

Its subcellular location is the plastid. The protein localises to the chloroplast thylakoid membrane. The enzyme catalyses reduced [plastocyanin] + hnu + oxidized [2Fe-2S]-[ferredoxin] = oxidized [plastocyanin] + reduced [2Fe-2S]-[ferredoxin]. Apoprotein for the two 4Fe-4S centers FA and FB of photosystem I (PSI); essential for photochemical activity. FB is the terminal electron acceptor of PSI, donating electrons to ferredoxin. The C-terminus interacts with PsaA/B/D and helps assemble the protein into the PSI complex. Required for binding of PsaD and PsaE to PSI. PSI is a plastocyanin-ferredoxin oxidoreductase, converting photonic excitation into a charge separation, which transfers an electron from the donor P700 chlorophyll pair to the spectroscopically characterized acceptors A0, A1, FX, FA and FB in turn. This is Photosystem I iron-sulfur center from Vitis vinifera (Grape).